The following is a 61-amino-acid chain: Large ribosomal subunit protein uL30 (61 aa).

This sequence belongs to the universal ribosomal protein uL30 family. As to quaternary structure, part of the 50S ribosomal subunit.

The chain is Large ribosomal subunit protein uL30 from Frankia alni (strain DSM 45986 / CECT 9034 / ACN14a).